We begin with the raw amino-acid sequence, 261 residues long: Adenosylcobinamide-GDP ribazoletransferase (261 aa).

Helical transmembrane passes span 9–29, 41–61, 64–84, 114–134, 141–161, 196–216, and 235–255; these read LELFLLAVSFFSRIPVPVSLP, YFALVGLLLGAICALVYSLAT, FSTNISVFLTMVLSLLLTGAF, IGTYGSSALIMVLLGKYLLLT, SLVPVWLLAYTLSRAVAASLI, ATLLYFSWQFIGVMIAASLIF, and CLGAAQQLMEILIYLILLAFL.

The protein belongs to the CobS family. Mg(2+) is required as a cofactor.

It localises to the cell inner membrane. It catalyses the reaction alpha-ribazole + adenosylcob(III)inamide-GDP = adenosylcob(III)alamin + GMP + H(+). The enzyme catalyses alpha-ribazole 5'-phosphate + adenosylcob(III)inamide-GDP = adenosylcob(III)alamin 5'-phosphate + GMP + H(+). The protein operates within cofactor biosynthesis; adenosylcobalamin biosynthesis; adenosylcobalamin from cob(II)yrinate a,c-diamide: step 7/7. Its function is as follows. Joins adenosylcobinamide-GDP and alpha-ribazole to generate adenosylcobalamin (Ado-cobalamin). Also synthesizes adenosylcobalamin 5'-phosphate from adenosylcobinamide-GDP and alpha-ribazole 5'-phosphate. This Vibrio cholerae serotype O1 (strain ATCC 39541 / Classical Ogawa 395 / O395) protein is Adenosylcobinamide-GDP ribazoletransferase.